A 269-amino-acid chain; its full sequence is MSDCIFVFQIPFIVYSKLDQWIFGNILCKIMSVLYYVGFFSNMFIITLMSIDRYFAIVHPIKRQPYRTKRIGILMCCSAWLLSLILSSPVSKLYENIPHMSKDIYQCTLTNENDSIIAFIKRLMQIEITILGFLIPIIIFVYCYYRIFSTVVRLRNRRKYKSIKIVLMIVVCSLICWIPLYIVLMIATIVSLYTSNIFRHLCLYLNLAYAITFSETISLARCCINPIIYTLIGEHVRSRISSICSCIYRDNRIRKKLFSRKSSSSSNII.

A disulfide bridge links Cys28 with Cys107. 5 helical membrane-spanning segments follow: residues 30–50 (IMSV…TLMS), 71–91 (IGIL…SPVS), 123–143 (LMQI…FVYC), 165–185 (IVLM…IVLM), and 200–220 (HLCL…ISLA).

It belongs to the G-protein coupled receptor 1 family.

It localises to the host cell membrane. In Sus scrofa (Pig), this protein is G-protein coupled receptor homolog C3.